We begin with the raw amino-acid sequence, 351 residues long: Fe-S cluster assembly protein DRE2 (351 aa).

An N-terminal SAM-like domain region spans residues M1–I151. Disordered stretches follow at residues R93 to D118 and R157 to N186. Composition is skewed to polar residues over residues G105–R114 and T167–N186. The linker stretch occupies residues P152–M243. Residues C253, C264, C267, and C269 each contribute to the [2Fe-2S] cluster site. The segment at C253–C269 is fe-S binding site A. The [4Fe-4S] cluster site is built by C314, C317, C325, and C328. 2 consecutive short sequence motifs (cx2C motif) follow at residues C314–C317 and C325–C328. The interval C314–C328 is fe-S binding site B.

The protein belongs to the anamorsin family. Monomer. Interacts with TAH18. Interacts with MIA40. [2Fe-2S] cluster serves as cofactor. The cofactor is [4Fe-4S] cluster.

Its subcellular location is the cytoplasm. The protein localises to the mitochondrion intermembrane space. Functionally, component of the cytosolic iron-sulfur (Fe-S) protein assembly (CIA) machinery required for the maturation of extramitochondrial Fe-S proteins. Part of an electron transfer chain functioning in an early step of cytosolic Fe-S biogenesis, facilitating the de novo assembly of a [4Fe-4S] cluster on the scaffold complex CFD1-NBP35. Electrons are transferred to DRE2 from NADPH via the FAD- and FMN-containing protein TAH18. TAH18-DRE2 are also required for the assembly of the diferric tyrosyl radical cofactor of ribonucleotide reductase (RNR), probably by providing electrons for reduction during radical cofactor maturation in the catalytic small subunit RNR2. This Ajellomyces capsulatus (strain NAm1 / WU24) (Darling's disease fungus) protein is Fe-S cluster assembly protein DRE2.